The chain runs to 101 residues: Ascorbate-specific PTS system EIIB component (101 aa).

In terms of domain architecture, PTS EIIB type-2 spans 3-96 (VRILAVCGNG…KLLEVIKAHF (94 aa)). C9 functions as the Phosphocysteine intermediate in the catalytic mechanism. At C9 the chain carries Phosphocysteine.

It localises to the cytoplasm. It catalyses the reaction N(pros)-phospho-L-histidyl-[protein] + L-ascorbate(out) = L-ascorbate 6-phosphate(in) + L-histidyl-[protein]. Functionally, the phosphoenolpyruvate-dependent sugar phosphotransferase system (sugar PTS), a major carbohydrate active transport system, catalyzes the phosphorylation of incoming sugar substrates concomitantly with their translocation across the cell membrane. The enzyme II UlaABC PTS system is involved in ascorbate transport. The sequence is that of Ascorbate-specific PTS system EIIB component (ulaB) from Escherichia coli O6:H1 (strain CFT073 / ATCC 700928 / UPEC).